The chain runs to 195 residues: L-rhamnose-binding lectin CSL2 (195 aa).

SUEL-type lectin domains lie at Thr1–Leu97 and Thr104–Gly195.

Its function is as follows. L-rhamnose binding lectin. Has hemagglutinating activity towards rabbit erythrocytes and human type B erythrocytes. Hemagglutinating activity is inhibited by smooth-type lipopolysaccharide (LPS) from S.flexneri 1A and E.coli K12, but not by rough-type LPS from S.flexneri, E.coli K12 and E.coli EH100. Agglutinates E.coli K12 and B.subtilis. The sequence is that of L-rhamnose-binding lectin CSL2 from Oncorhynchus keta (Chum salmon).